A 180-amino-acid polypeptide reads, in one-letter code: Adenosine 5'-phosphosulfate reductase (180 aa).

Positions 57, 58, 140, and 143 each coordinate [4Fe-4S] cluster. The active-site Nucleophile; cysteine thiosulfonate intermediate is C168.

Belongs to the PAPS reductase family. CysH subfamily. Requires [4Fe-4S] cluster as cofactor.

It is found in the cytoplasm. The enzyme catalyses [thioredoxin]-disulfide + sulfite + AMP + 2 H(+) = adenosine 5'-phosphosulfate + [thioredoxin]-dithiol. The protein operates within sulfur metabolism; hydrogen sulfide biosynthesis; sulfite from sulfate. Catalyzes the formation of sulfite from adenosine 5'-phosphosulfate (APS) using thioredoxin as an electron donor. The protein is Adenosine 5'-phosphosulfate reductase of Rhizobium tropici.